A 397-amino-acid polypeptide reads, in one-letter code: Tryptophan synthase beta chain (397 aa).

At Lys-91 the chain carries N6-(pyridoxal phosphate)lysine.

Belongs to the TrpB family. In terms of assembly, tetramer of two alpha and two beta chains. Requires pyridoxal 5'-phosphate as cofactor.

It carries out the reaction (1S,2R)-1-C-(indol-3-yl)glycerol 3-phosphate + L-serine = D-glyceraldehyde 3-phosphate + L-tryptophan + H2O. It participates in amino-acid biosynthesis; L-tryptophan biosynthesis; L-tryptophan from chorismate: step 5/5. In terms of biological role, the beta subunit is responsible for the synthesis of L-tryptophan from indole and L-serine. This is Tryptophan synthase beta chain from Bacillus cereus (strain Q1).